The primary structure comprises 374 residues: Transaldolase (374 aa).

The Schiff-base intermediate with substrate role is filled by lysine 140.

Belongs to the transaldolase family. Type 2 subfamily.

The protein resides in the cytoplasm. It carries out the reaction D-sedoheptulose 7-phosphate + D-glyceraldehyde 3-phosphate = D-erythrose 4-phosphate + beta-D-fructose 6-phosphate. The protein operates within carbohydrate degradation; pentose phosphate pathway; D-glyceraldehyde 3-phosphate and beta-D-fructose 6-phosphate from D-ribose 5-phosphate and D-xylulose 5-phosphate (non-oxidative stage): step 2/3. Functionally, transaldolase is important for the balance of metabolites in the pentose-phosphate pathway. The polypeptide is Transaldolase (Renibacterium salmoninarum (strain ATCC 33209 / DSM 20767 / JCM 11484 / NBRC 15589 / NCIMB 2235)).